The chain runs to 540 residues: Coatomer subunit delta (540 aa).

The segment at 169 to 263 is disordered; that stretch reads RHEEMLRGKR…GMILGGKSGT (95 aa). Residues 179–197 are compositionally biased toward gly residues; that stretch reads SGGYTGISGGGGMGSGGMG. Over residues 212-229 the composition is skewed to low complexity; that stretch reads NNNNNNNNNNNNNNNNNN. Over residues 238–250 the composition is skewed to polar residues; it reads SPNTSRPSAASSG. Over residues 251–261 the composition is skewed to gly residues; the sequence is SQGGMILGGKS. The MHD domain maps to 304–540; sequence QEGVHITVEE…TLSVDTYEIK (237 aa).

It belongs to the adaptor complexes medium subunit family. Delta-COP subfamily. In terms of assembly, oligomeric complex that consists of at least the alpha, beta, beta', gamma, delta, epsilon and zeta subunits.

It is found in the cytoplasm. The protein resides in the golgi apparatus membrane. Its subcellular location is the cytoplasmic vesicle. It localises to the COPI-coated vesicle membrane. The coatomer is a cytosolic protein complex that binds to dilysine motifs and reversibly associates with Golgi non-clathrin-coated vesicles, which further mediate biosynthetic protein transport from the ER, via the Golgi up to the trans Golgi network. Coatomer complex is required for budding from Golgi membranes, and is essential for the retrograde Golgi-to-ER transport of dilysine-tagged proteins. This Dictyostelium discoideum (Social amoeba) protein is Coatomer subunit delta (copd).